The following is a 139-amino-acid chain: D-ribose pyranase (139 aa).

The Proton donor role is filled by His-20. Residues Asp-28, His-106, and 128-130 each bind substrate; that span reads YAN.

This sequence belongs to the RbsD / FucU family. RbsD subfamily. As to quaternary structure, homodecamer.

It is found in the cytoplasm. It catalyses the reaction beta-D-ribopyranose = beta-D-ribofuranose. Its pathway is carbohydrate metabolism; D-ribose degradation; D-ribose 5-phosphate from beta-D-ribopyranose: step 1/2. Functionally, catalyzes the interconversion of beta-pyran and beta-furan forms of D-ribose. The chain is D-ribose pyranase from Aliivibrio fischeri (strain ATCC 700601 / ES114) (Vibrio fischeri).